The sequence spans 155 residues: Protein-export protein SecB (155 aa).

Belongs to the SecB family. As to quaternary structure, homotetramer, a dimer of dimers. One homotetramer interacts with 1 SecA dimer.

The protein localises to the cytoplasm. One of the proteins required for the normal export of preproteins out of the cell cytoplasm. It is a molecular chaperone that binds to a subset of precursor proteins, maintaining them in a translocation-competent state. It also specifically binds to its receptor SecA. The chain is Protein-export protein SecB from Vibrio atlanticus (strain LGP32) (Vibrio splendidus (strain Mel32)).